Reading from the N-terminus, the 440-residue chain is Thymidine phosphorylase (440 aa).

This sequence belongs to the thymidine/pyrimidine-nucleoside phosphorylase family. In terms of assembly, homodimer.

The catalysed reaction is thymidine + phosphate = 2-deoxy-alpha-D-ribose 1-phosphate + thymine. Its pathway is pyrimidine metabolism; dTMP biosynthesis via salvage pathway; dTMP from thymine: step 1/2. In terms of biological role, the enzymes which catalyze the reversible phosphorolysis of pyrimidine nucleosides are involved in the degradation of these compounds and in their utilization as carbon and energy sources, or in the rescue of pyrimidine bases for nucleotide synthesis. In Salmonella agona (strain SL483), this protein is Thymidine phosphorylase.